The primary structure comprises 135 residues: uncharacterized protein (135 aa).

Residues 35–55 (VVLVLIGATIILVVISVLVVS) form a helical membrane-spanning segment.

The protein localises to the membrane. This is an uncharacterized protein from Saccharomyces cerevisiae (strain ATCC 204508 / S288c) (Baker's yeast).